The primary structure comprises 142 residues: Photosystem II extrinsic protein U (142 aa).

Positions 1–29 (MKGLVRLLTVFSLLLGCWGWLGTTQIAQA) are cleaved as a signal peptide.

This sequence belongs to the PsbU family. As to quaternary structure, PSII is composed of 1 copy each of membrane proteins PsbA, PsbB, PsbC, PsbD, PsbE, PsbF, PsbH, PsbI, PsbJ, PsbK, PsbL, PsbM, PsbT, PsbX, PsbY, PsbZ, Psb30/Ycf12, peripheral proteins PsbO, CyanoQ (PsbQ), PsbU, PsbV and a large number of cofactors. It forms dimeric complexes.

The protein resides in the cellular thylakoid membrane. In terms of biological role, one of the extrinsic, lumenal subunits of photosystem II (PSII). PSII is a light-driven water plastoquinone oxidoreductase, using light energy to abstract electrons from H(2)O, generating a proton gradient subsequently used for ATP formation. The extrinsic proteins stabilize the structure of photosystem II oxygen-evolving complex (OEC), the ion environment of oxygen evolution and protect the OEC against heat-induced inactivation. This Trichormus variabilis (strain ATCC 29413 / PCC 7937) (Anabaena variabilis) protein is Photosystem II extrinsic protein U.